The sequence spans 249 residues: tRNA pseudouridine synthase A (249 aa).

Catalysis depends on Asp-53, which acts as the Nucleophile. A substrate-binding site is contributed by Tyr-111.

Belongs to the tRNA pseudouridine synthase TruA family. As to quaternary structure, homodimer.

It catalyses the reaction uridine(38/39/40) in tRNA = pseudouridine(38/39/40) in tRNA. Functionally, formation of pseudouridine at positions 38, 39 and 40 in the anticodon stem and loop of transfer RNAs. This is tRNA pseudouridine synthase A from Streptococcus sanguinis (strain SK36).